A 615-amino-acid chain; its full sequence is Crinkler effector protein 15 (615 aa).

The N-terminal stretch at 1–17 (MVKLVCAIVGVAGSAFP) is a signal peptide. An LQLFLAK domain region spans residues 18 to 54 (VDIDASQLVGDLKKAIKAENAMTFTGDAKDLQLFLAK). Residues 55 to 136 (QPVDDESGKE…NMELPSSEQI (82 aa)) form a DWL domain region. The short motif at 137–143 (HVLVVVP) is the HVLVXXP motif element. Asn531 carries an N-linked (GlcNAc...) asparagine glycan.

Belongs to the Crinkler effector family.

The protein localises to the secreted. The protein resides in the host nucleus. Its function is as follows. Secreted effector that elicits necrosis in host plants, a characteristic of plant innate immunity. This is Crinkler effector protein 15 from Phytophthora infestans (Potato late blight agent).